A 277-amino-acid chain; its full sequence is 4-hydroxy-tetrahydrodipicolinate reductase (277 aa).

NAD(+) is bound by residues 10 to 15 (GAGGRM) and glutamate 36. Arginine 37 contributes to the NADP(+) binding site. Residues 100–102 (GTT) and 124–127 (SGNM) each bind NAD(+). Histidine 158 functions as the Proton donor/acceptor in the catalytic mechanism. Histidine 159 contacts (S)-2,3,4,5-tetrahydrodipicolinate. The Proton donor role is filled by lysine 162. 168 to 169 (GT) is a binding site for (S)-2,3,4,5-tetrahydrodipicolinate.

Belongs to the DapB family.

It localises to the cytoplasm. It catalyses the reaction (S)-2,3,4,5-tetrahydrodipicolinate + NAD(+) + H2O = (2S,4S)-4-hydroxy-2,3,4,5-tetrahydrodipicolinate + NADH + H(+). It carries out the reaction (S)-2,3,4,5-tetrahydrodipicolinate + NADP(+) + H2O = (2S,4S)-4-hydroxy-2,3,4,5-tetrahydrodipicolinate + NADPH + H(+). It functions in the pathway amino-acid biosynthesis; L-lysine biosynthesis via DAP pathway; (S)-tetrahydrodipicolinate from L-aspartate: step 4/4. In terms of biological role, catalyzes the conversion of 4-hydroxy-tetrahydrodipicolinate (HTPA) to tetrahydrodipicolinate. In Chelativorans sp. (strain BNC1), this protein is 4-hydroxy-tetrahydrodipicolinate reductase.